Reading from the N-terminus, the 352-residue chain is Forkhead box protein D5 (352 aa).

Disordered regions lie at residues 1–32 (MSLS…LGED) and 47–92 (HSEM…GKAK). The segment covering 20-32 (SDEEDEIDILGED) has biased composition (acidic residues). Residues 73 to 82 (ESEGGTSKDS) show a composition bias toward low complexity. Positions 97-191 (KPPYSYIALI…DNGSFLRRRK (95 aa)) form a DNA-binding region, fork-head.

In terms of tissue distribution, expression begins in the newly forming dorsal mesoderm and is maintained during gastrulation at the dorsal blastopore lip (Spemann organizer). At the early neurula stages, expressed in a row of cells along the dorsal midline that are destined to become the fllor plate of the neural tube. At late neurula, expressed within the anterior and posterior poles of the embryo. After neural closure, expression is detected only in the tailtip, the otic vesicle and at the midbrain/hindbrain boundary.

It localises to the nucleus. Its function is as follows. Transcriptional repressor. This chain is Forkhead box protein D5, found in Xenopus tropicalis (Western clawed frog).